We begin with the raw amino-acid sequence, 600 residues long: DDB1- and CUL4-associated factor 15 (600 aa).

The disordered stretch occupies residues 1–30; it reads MAPSSKSERNSGAGSGGGGPGGAGGKRAAG. Residues 13–27 show a composition bias toward gly residues; sequence AGSGGGGPGGAGGKR. Position 50 is a phosphoserine (S50). Zn(2+)-binding residues include C193, C196, C211, and H214. E7820 is bound by residues F231 and 234–235; that span reads AF. Over residues 280-295 the composition is skewed to pro residues; that stretch reads PASPPEPQSPELPPAL. The interval 280–316 is disordered; that stretch reads PASPPEPQSPELPPALPSFCPEAAPARSSGSPEPSPA. Residues S310 and S314 each carry the phosphoserine modification.

As to quaternary structure, component of the DCX(DCAF15) complex, also named CLR4(DCAF15) complex, composed of DCAF15, DDB1, cullin-4 (CUL4A or CUL4B), DDA1 and RBX1.

It participates in protein modification; protein ubiquitination. Aryl sulfonamide anticancer drugs change the substrate specificity of DCAF15 by acting as a molecular glue that promotes binding between DCAF15 and weak affinity interactors, such as RBM39. Substrate-recognition component of the DCX(DCAF15) complex, a cullin-4-RING E3 ubiquitin-protein ligase complex that mediates ubiquitination and degradation of target proteins. The DCX(DCAF15) complex acts as a regulator of the natural killer (NK) cells effector functions, possibly by mediating ubiquitination and degradation of cohesin subunits SMC1A and SMC3. May play a role in the activation of antigen-presenting cells (APC) and their interaction with NK cells. Functionally, binding of aryl sulfonamide anticancer drugs, such as indisulam (E7070) or E7820, change the substrate specificity of the DCX(DCAF15) complex, leading to promote ubiquitination and degradation of splicing factor RBM39. RBM39 degradation results in splicing defects and death in cancer cell lines. Aryl sulfonamide anticancer drugs change the substrate specificity of DCAF15 by acting as a molecular glue that promotes binding between DCAF15 and weak affinity interactor RBM39. Aryl sulfonamide anticancer drugs also promote ubiquitination and degradation of RBM23 and PRPF39. This chain is DDB1- and CUL4-associated factor 15, found in Homo sapiens (Human).